Here is a 362-residue protein sequence, read N- to C-terminus: 2-aminoethylphosphonate--pyruvate transaminase (362 aa).

N6-(pyridoxal phosphate)lysine is present on Lys193.

It belongs to the class-V pyridoxal-phosphate-dependent aminotransferase family. PhnW subfamily. Homodimer. Requires pyridoxal 5'-phosphate as cofactor.

The enzyme catalyses (2-aminoethyl)phosphonate + pyruvate = phosphonoacetaldehyde + L-alanine. In terms of biological role, involved in phosphonate degradation. This chain is 2-aminoethylphosphonate--pyruvate transaminase, found in Bacteroides fragilis (strain YCH46).